The following is a 146-amino-acid chain: Deoxyuridine 5'-triphosphate nucleotidohydrolase (146 aa).

Substrate is bound by residues 65 to 67 (RSG), asparagine 78, 82 to 84 (LID), and methionine 92.

Belongs to the dUTPase family. Mg(2+) serves as cofactor.

It catalyses the reaction dUTP + H2O = dUMP + diphosphate + H(+). The protein operates within pyrimidine metabolism; dUMP biosynthesis; dUMP from dCTP (dUTP route): step 2/2. Functionally, this enzyme is involved in nucleotide metabolism: it produces dUMP, the immediate precursor of thymidine nucleotides and it decreases the intracellular concentration of dUTP so that uracil cannot be incorporated into DNA. This is Deoxyuridine 5'-triphosphate nucleotidohydrolase from Thiobacillus denitrificans (strain ATCC 25259 / T1).